Consider the following 140-residue polypeptide: Ribonuclease P protein subunit p20 (140 aa).

Belongs to the histone-like Alba family. Component of nuclear RNase P and RNase MRP complexes. RNase P consists of a catalytic RNA moiety and 10 different protein chains; POP1, POP4, POP5, POP7, RPP14, RPP21, RPP25, RPP30, RPP38 and RPP40. Within the RNase P complex, POP1, POP7 and RPP25 form the 'finger' subcomplex, POP5, RPP14, RPP40 and homodimeric RPP30 form the 'palm' subcomplex, and RPP21, POP4 and RPP38 form the 'wrist' subcomplex. All subunits of the RNase P complex interact with the catalytic RNA. Several subunits of RNase P are also part of the RNase MRP complex. RNase MRP consists of a catalytic RNA moiety and about 8 protein subunits; POP1, POP7, RPP25, RPP30, RPP38, RPP40 and possibly also POP4 and POP5. Interacts with SMN1. POP7 forms a heterodimer with RPP25 that binds to the P3 stem loop of the catalytic RNA.

The protein resides in the nucleus. It is found in the nucleolus. Its subcellular location is the cytoplasm. The protein localises to the cytoplasmic granule. Functionally, component of ribonuclease P, a ribonucleoprotein complex that generates mature tRNA molecules by cleaving their 5'-ends. Also a component of the MRP ribonuclease complex, which cleaves pre-rRNA sequences. The polypeptide is Ribonuclease P protein subunit p20 (POP7) (Homo sapiens (Human)).